A 773-amino-acid chain; its full sequence is Ribosomal protein S6 kinase alpha-4 (773 aa).

Residues phenylalanine 33–phenylalanine 301 enclose the Protein kinase 1 domain. ATP-binding positions include leucine 39 to valine 47 and lysine 65. Aspartate 161 serves as the catalytic Proton acceptor. The residue at position 196 (serine 196) is a Phosphoserine; by autocatalysis. One can recognise an AGC-kinase C-terminal domain in the interval glutamine 302–asparagine 371. Serine 343 carries the phosphoserine; by MAPK1, MAPK3 and MAPK14 modification. Serine 347 bears the Phosphoserine mark. A phosphoserine; by autocatalysis mark is found at serine 360 and serine 365. ATP is bound by residues leucine 417–cysteine 425 and lysine 440. Residues leucine 417 to leucine 674 enclose the Protein kinase 2 domain. The active-site Proton acceptor is aspartate 530. Residue threonine 542 is modified to Phosphothreonine. Phosphothreonine; by MAPK1, MAPK3 and MAPK14 is present on threonine 568. Phosphoserine occurs at positions 634 and 678. Disordered stretches follow at residues leucine 674–proline 696 and alanine 728–serine 773. Threonine 687 carries the post-translational modification Phosphothreonine. 2 positions are modified to phosphoserine; by autocatalysis: serine 737 and serine 745.

The protein belongs to the protein kinase superfamily. AGC Ser/Thr protein kinase family. S6 kinase subfamily. As to quaternary structure, forms a complex with either MAPK1/ERK2 or MAPK3/ERK1 in quiescent cells which transiently dissociates following mitogenic stimulation. Also associates with MAPK14/p38-alpha. Activated RPS6KA4 associates with and phosphorylates the NF-kappa-B p65 subunit RELA. Mg(2+) is required as a cofactor. Ser-343 and Thr-568 phosphorylation is required for kinase activity. Ser-343 and Ser-196 are autophosphorylated by the C-terminal kinase domain, and their phosphorylation is essential for the catalytic activity of the N-terminal kinase domain. Phosphorylated at Ser-343, Thr-568 and Thr-687 by MAPK1/ERK2, MAPK3/ERK1 and MAPK14/p38-alpha. Autophosphorylated at Ser-737 and Ser-745 by the N-terminal kinase domain.

Its subcellular location is the nucleus. It catalyses the reaction L-seryl-[protein] + ATP = O-phospho-L-seryl-[protein] + ADP + H(+). The catalysed reaction is L-threonyl-[protein] + ATP = O-phospho-L-threonyl-[protein] + ADP + H(+). With respect to regulation, activated by phosphorylation at Ser-343, Thr-568 and Thr-687 by MAPK1/ERK2, MAPK3/ERK1 and MAPK14/p38-alpha, and by further autophosphorylation of Ser-196, Ser-360 and Ser-365 by the activated C-terminal kinase domain. Serine/threonine-protein kinase that is required for the mitogen or stress-induced phosphorylation of the transcription factors CREB1 and ATF1 and for the regulation of the transcription factor RELA, and that contributes to gene activation by histone phosphorylation and functions in the regulation of inflammatory genes. Phosphorylates CREB1 and ATF1 in response to mitogenic or stress stimuli such as UV-C irradiation, epidermal growth factor (EGF) and anisomycin. Plays an essential role in the control of RELA transcriptional activity in response to TNF. Phosphorylates 'Ser-10' of histone H3 in response to mitogenics, stress stimuli and EGF, which results in the transcriptional activation of several immediate early genes, including proto-oncogenes c-fos/FOS and c-jun/JUN. May also phosphorylate 'Ser-28' of histone H3. Mediates the mitogen- and stress-induced phosphorylation of high mobility group protein 1 (HMGN1/HMG14). In lipopolysaccharide-stimulated primary macrophages, acts downstream of the Toll-like receptor TLR4 to limit the production of pro-inflammatory cytokines. Functions probably by inducing transcription of the MAP kinase phosphatase DUSP1 and the anti-inflammatory cytokine interleukin 10 (IL10), via CREB1 and ATF1 transcription factors. The protein is Ribosomal protein S6 kinase alpha-4 (Rps6ka4) of Mus musculus (Mouse).